The chain runs to 971 residues: UPF0182 protein CMS1887 (971 aa).

7 helical membrane-spanning segments follow: residues Leu16–Phe36, Trp56–Val76, Leu108–Gly128, Phe161–Leu181, Ile205–Asp225, Thr255–Gly275, and Ile281–Ile301. The segment covering Gln687–Ala702 has biased composition (polar residues). Disordered stretches follow at residues Gln687–Ala706 and Gly874–Val924. Composition is skewed to low complexity over residues Pro884–Ala900 and Ser907–Ala921.

Belongs to the UPF0182 family.

The protein localises to the cell membrane. This chain is UPF0182 protein CMS1887, found in Clavibacter sepedonicus (Clavibacter michiganensis subsp. sepedonicus).